The chain runs to 314 residues: Phospho-N-acetylmuramoyl-pentapeptide-transferase (314 aa).

The next 10 membrane-spanning stretches (helical) occupy residues 4–24 (LIFYITLITFIFLLFLYPIFI), 52–72 (TMGGILFILAIFFLSLLTYFI), 77–97 (LFLIIGVASLLFGFIGFLDDY), 111–131 (IQKLLLQFLFSIVIVYLISIF), 146–166 (LDLKFFYPLWGIIYLTGMSNA), 169–189 (LTDGIDGLSGGIYVISALFTA), 191–211 (IAGINFNHIPLLILPVIAYLF), 219–239 (IFMGDTGSLALGGILGSLALY), 242–262 (VELFTILTCFIFISEMFSVII), and 294–314 (IVLIFWTINILTGIVALGGVL).

Belongs to the glycosyltransferase 4 family. MraY subfamily. It depends on Mg(2+) as a cofactor.

The protein resides in the cell inner membrane. It carries out the reaction UDP-N-acetyl-alpha-D-muramoyl-L-alanyl-gamma-D-glutamyl-meso-2,6-diaminopimeloyl-D-alanyl-D-alanine + di-trans,octa-cis-undecaprenyl phosphate = di-trans,octa-cis-undecaprenyl diphospho-N-acetyl-alpha-D-muramoyl-L-alanyl-D-glutamyl-meso-2,6-diaminopimeloyl-D-alanyl-D-alanine + UMP. The protein operates within cell wall biogenesis; peptidoglycan biosynthesis. Catalyzes the initial step of the lipid cycle reactions in the biosynthesis of the cell wall peptidoglycan: transfers peptidoglycan precursor phospho-MurNAc-pentapeptide from UDP-MurNAc-pentapeptide onto the lipid carrier undecaprenyl phosphate, yielding undecaprenyl-pyrophosphoryl-MurNAc-pentapeptide, known as lipid I. The polypeptide is Phospho-N-acetylmuramoyl-pentapeptide-transferase (Petrotoga mobilis (strain DSM 10674 / SJ95)).